Reading from the N-terminus, the 440-residue chain is Transposon Ty1-MR1 Gag polyprotein (440 aa).

Composition is skewed to polar residues over residues 1–31 (MESQQLSQHSPISHGSACASVTSKEVQTTQD), 46–60 (VSTQANSQQPTTPLS), and 137–168 (VGTHLNTPSPESGNSFPDSSSAKSNMTSTNQH). 3 disordered regions span residues 1–88 (MESQ…YPQQ), 137–174 (VGTHLNTPSPESGNSFPDSSSAKSNMTSTNQHVRPPPI), and 350–424 (QQES…TTEP). Residues 299-401 (NNGIPINNKV…NSQSRTARAH (103 aa)) form an RNA-binding region. The segment covering 363-372 (SPSDEKKDSR) has biased composition (basic and acidic residues). Residues 373–411 (TYTNTTKPKSITRNSQKPNNSQSRTARAHNVSTFNNSPG) show a composition bias toward polar residues.

As to quaternary structure, homotrimer.

It localises to the cytoplasm. Capsid protein (CA) is the structural component of the virus-like particle (VLP), forming the shell that encapsulates the retrotransposons dimeric RNA genome. The particles are assembled from trimer-clustered units and there are holes in the capsid shells that allow for the diffusion of macromolecules. CA also has nucleocapsid-like chaperone activity, promoting primer tRNA(i)-Met annealing to the multipartite primer-binding site (PBS), dimerization of Ty1 RNA and initiation of reverse transcription. The sequence is that of Transposon Ty1-MR1 Gag polyprotein (TY1A-MR1) from Saccharomyces cerevisiae (strain ATCC 204508 / S288c) (Baker's yeast).